The sequence spans 107 residues: UPF0122 protein MYPE4850 (107 aa).

This sequence belongs to the UPF0122 family.

Might take part in the signal recognition particle (SRP) pathway. This is inferred from the conservation of its genetic proximity to ftsY/ffh. May be a regulatory protein. This chain is UPF0122 protein MYPE4850, found in Malacoplasma penetrans (strain HF-2) (Mycoplasma penetrans).